The chain runs to 85 residues: HssA/B-like protein 62 (85 aa).

The protein belongs to the hssA/B family.

In Dictyostelium discoideum (Social amoeba), this protein is HssA/B-like protein 62 (hssl62).